The following is a 233-amino-acid chain: DNA repair protein RecO (233 aa).

The protein belongs to the RecO family.

Its function is as follows. Involved in DNA repair and RecF pathway recombination. The sequence is that of DNA repair protein RecO from Pseudomonas paraeruginosa (strain DSM 24068 / PA7) (Pseudomonas aeruginosa (strain PA7)).